Consider the following 211-residue polypeptide: Thymidylate kinase (211 aa).

Residue 11 to 18 (GPDGAGKT) coordinates ATP.

Belongs to the thymidylate kinase family.

The enzyme catalyses dTMP + ATP = dTDP + ADP. Phosphorylation of dTMP to form dTDP in both de novo and salvage pathways of dTTP synthesis. The sequence is that of Thymidylate kinase from Streptococcus agalactiae serotype Ia (strain ATCC 27591 / A909 / CDC SS700).